The primary structure comprises 161 residues: RuBisCO chaperone RbcX (161 aa).

Disordered regions lie at residues 1–20 and 130–161; these read MQFM…KPME and LGAE…SHAD. Residues 147-161 are compositionally biased toward polar residues; that stretch reads DSATPDDASNASHAD.

The protein belongs to the RbcX family. In terms of assembly, homodimer. Interacts with the exposed C-terminal peptide of endogenous RbcL ('Lys-460-Asp-470') via its central cleft, as well as C-terminal peptides from other cyanobacterial RbcL. Contacts a second RbcL monomer via its peripheral polar surface.

The protein resides in the carboxysome. The protein localises to the cytoplasm. In terms of biological role, an RbcL-specific chaperone. The central cleft of the RbcX homodimer (RbcX2) binds the C-terminus of an RbcL monomer, stabilizing the C-terminus and probably preventing its reassociation with chaperonin GroEL-ES. At the same time the peripheral region of RbcX2 binds a second RbcL monomer, bridging the RbcL homodimers in the correct orientation. The RbcX2(2)-bound RbcL dimers then assemble into the RbcL8 core (RbcL8-(RbcX2)8). RbcS binding triggers the release of RbcX2. The sequence is that of RuBisCO chaperone RbcX from Synechococcus sp. (strain ATCC 27144 / PCC 6301 / SAUG 1402/1) (Anacystis nidulans).